A 187-amino-acid chain; its full sequence is Pyridoxal 5'-phosphate synthase subunit PdxT (187 aa).

Gly-47–Ser-49 serves as a coordination point for L-glutamine. The Nucleophile role is filled by Cys-76. Residues Arg-102 and Ile-128–Arg-129 each bind L-glutamine. Catalysis depends on charge relay system residues His-165 and Glu-167.

It belongs to the glutaminase PdxT/SNO family. In the presence of PdxS, forms a dodecamer of heterodimers. Only shows activity in the heterodimer.

It catalyses the reaction aldehydo-D-ribose 5-phosphate + D-glyceraldehyde 3-phosphate + L-glutamine = pyridoxal 5'-phosphate + L-glutamate + phosphate + 3 H2O + H(+). The catalysed reaction is L-glutamine + H2O = L-glutamate + NH4(+). It functions in the pathway cofactor biosynthesis; pyridoxal 5'-phosphate biosynthesis. In terms of biological role, catalyzes the hydrolysis of glutamine to glutamate and ammonia as part of the biosynthesis of pyridoxal 5'-phosphate. The resulting ammonia molecule is channeled to the active site of PdxS. This Methanococcus vannielii (strain ATCC 35089 / DSM 1224 / JCM 13029 / OCM 148 / SB) protein is Pyridoxal 5'-phosphate synthase subunit PdxT.